Consider the following 191-residue polypeptide: Retinin (191 aa).

The signal sequence occupies residues 1–21 (MSRLFLPVLAIVLVSIGASHT). The disordered stretch occupies residues 52 to 88 (LADGSSGSVSSSAAQPEDQSQEEAEEQQVSSASSGSA). Composition is skewed to low complexity over residues 55 to 69 (GSSG…QPED) and 78 to 88 (QQVSSASSGSA).

Post-translationally, phosphorylated. In terms of tissue distribution, specifically expressed in cornea (at protein level). Detected in retina and cortex.

Its subcellular location is the secreted. The chain is Retinin from Drosophila melanogaster (Fruit fly).